The sequence spans 208 residues: Imidazoleglycerol-phosphate dehydratase (208 aa).

This sequence belongs to the imidazoleglycerol-phosphate dehydratase family.

The protein localises to the cytoplasm. It carries out the reaction D-erythro-1-(imidazol-4-yl)glycerol 3-phosphate = 3-(imidazol-4-yl)-2-oxopropyl phosphate + H2O. Its pathway is amino-acid biosynthesis; L-histidine biosynthesis; L-histidine from 5-phospho-alpha-D-ribose 1-diphosphate: step 6/9. The sequence is that of Imidazoleglycerol-phosphate dehydratase from Pseudarthrobacter chlorophenolicus (strain ATCC 700700 / DSM 12829 / CIP 107037 / JCM 12360 / KCTC 9906 / NCIMB 13794 / A6) (Arthrobacter chlorophenolicus).